A 259-amino-acid polypeptide reads, in one-letter code: PKHD-type hydroxylase PsycPRwf_1523 (259 aa).

Residues 80 to 180 (VIMPPLFSAY…RLAMVTWVQS (101 aa)) enclose the Fe2OG dioxygenase domain. The Fe cation site is built by H98, D100, and H161. 2-oxoglutarate is bound at residue R171.

Fe(2+) serves as cofactor. Requires L-ascorbate as cofactor.

The sequence is that of PKHD-type hydroxylase PsycPRwf_1523 from Psychrobacter sp. (strain PRwf-1).